The primary structure comprises 475 residues: Chromosomal replication initiator protein DnaA (475 aa).

The interval 1 to 73 (MSDIEQERWS…LACWQAELPD (73 aa)) is domain I, interacts with DnaA modulators. Positions 73 to 131 (DVHRIDLMVRSAMRCAAPAKEAPAADPRRPEHGDGRASTELKMVATAPASANHDALGGS) are domain II. The interval 132 to 354 (PLDPRLTFAS…GAINRLLAHS (223 aa)) is domain III, AAA+ region. Residues Gly-179, Gly-181, Lys-182, and Thr-183 each coordinate ATP. The interval 355–475 (KLNAQPVTLE…VELLKRQLQE (121 aa)) is domain IV, binds dsDNA.

It belongs to the DnaA family. Oligomerizes as a right-handed, spiral filament on DNA at oriC.

The protein resides in the cytoplasm. Plays an essential role in the initiation and regulation of chromosomal replication. ATP-DnaA binds to the origin of replication (oriC) to initiate formation of the DNA replication initiation complex once per cell cycle. Binds the DnaA box (a 9 base pair repeat at the origin) and separates the double-stranded (ds)DNA. Forms a right-handed helical filament on oriC DNA; dsDNA binds to the exterior of the filament while single-stranded (ss)DNA is stabiized in the filament's interior. The ATP-DnaA-oriC complex binds and stabilizes one strand of the AT-rich DNA unwinding element (DUE), permitting loading of DNA polymerase. After initiation quickly degrades to an ADP-DnaA complex that is not apt for DNA replication. Binds acidic phospholipids. In Nitrobacter hamburgensis (strain DSM 10229 / NCIMB 13809 / X14), this protein is Chromosomal replication initiator protein DnaA.